We begin with the raw amino-acid sequence, 362 residues long: sn-glycerol-3-phosphate import ATP-binding protein UgpC (362 aa).

The 232-residue stretch at 4–235 (LSFRNVKKTY…PASTFVAGFI (232 aa)) folds into the ABC transporter domain. 37 to 44 (GPSGCGKS) contacts ATP.

This sequence belongs to the ABC transporter superfamily. sn-glycerol-3-phosphate importer (TC 3.A.1.1.3) family. As to quaternary structure, the complex is composed of two ATP-binding proteins (UgpC), two transmembrane proteins (UgpA and UgpE) and a solute-binding protein (UgpB).

It is found in the cell inner membrane. It catalyses the reaction sn-glycerol 3-phosphate(out) + ATP + H2O = sn-glycerol 3-phosphate(in) + ADP + phosphate + H(+). Functionally, part of the ABC transporter complex UgpBAEC involved in sn-glycerol-3-phosphate (G3P) import. Responsible for energy coupling to the transport system. The polypeptide is sn-glycerol-3-phosphate import ATP-binding protein UgpC (Bordetella bronchiseptica (strain ATCC BAA-588 / NCTC 13252 / RB50) (Alcaligenes bronchisepticus)).